Consider the following 140-residue polypeptide: Probable prefoldin subunit 6 (140 aa).

Belongs to the prefoldin subunit beta family. In terms of assembly, heterohexamer of two PFD-alpha type and four PFD-beta type subunits.

Binds specifically to cytosolic chaperonin (c-CPN) and transfers target proteins to it. Binds to nascent polypeptide chain and promotes folding in an environment in which there are many competing pathways for nonnative proteins. The protein is Probable prefoldin subunit 6 (pfdn6) of Dictyostelium discoideum (Social amoeba).